The chain runs to 346 residues: Free fatty acid receptor 3 (346 aa).

The Extracellular segment spans residues 1-19; the sequence is MDTGPDQSYFSGNHWFVFS. The chain crosses the membrane as a helical span at residues 20–40; it reads VYLLTFLVGLPLNLLALVVFV. Topologically, residues 41–47 are cytoplasmic; it reads GKLQRRP. Residues 48-68 form a helical membrane-spanning segment; it reads VAVDVLLLNLTASDLLLLLFL. The Extracellular segment spans residues 69-88; sequence PFRMVEAANGMHWPLPFILC. The cysteines at positions 88 and 169 are disulfide-linked. Residues 89-111 form a helical membrane-spanning segment; it reads PLSGFIFFTTIYLTALFLAAVSI. Residues 112–132 are Cytoplasmic-facing; the sequence is ERFLSVAHPLWYKTRPRLGQA. A helical transmembrane segment spans residues 133–153; that stretch reads GLVSVACWLLASAHCSVVYVI. Over 154-178 the chain is Extracellular; it reads EFSGDISHSQGTNGTCYLEFRKDQL. Asparagine 166 carries an N-linked (GlcNAc...) asparagine glycan. Residues 179–199 form a helical membrane-spanning segment; the sequence is AILLPVRLEMAVVLFVVPLII. The Cytoplasmic portion of the chain corresponds to 200-222; sequence TSYCYSRLVWILGRGGSHRRQRR. A helical membrane pass occupies residues 223 to 243; sequence VAGLLAATLLNFLVCFGPYNV. The Extracellular portion of the chain corresponds to 244–258; that stretch reads SHVVGYICGESPAWR. The chain crosses the membrane as a helical span at residues 259-279; that stretch reads IYVTLLSTLNSCVDPFVYYFS. The Cytoplasmic portion of the chain corresponds to 280 to 346; that stretch reads SSGFQADFHE…TGGQVACAES (67 aa). Residues 307-330 are compositionally biased toward basic and acidic residues; the sequence is MELKEQKGGEEQRADRPAERKTSE. Residues 307–346 are disordered; sequence MELKEQKGGEEQRADRPAERKTSEHSQGCGTGGQVACAES.

Belongs to the G-protein coupled receptor 1 family. Highest level in adipose tissue, and lower expression across all tissues tested. Expressed in sympathetic ganglia.

The protein localises to the cell membrane. G protein-coupled receptor that is activated by a major product of dietary fiber digestion, the short chain fatty acids (SCFAs), and that plays a role in the regulation of whole-body energy homeostasis and in intestinal immunity. In omnivorous mammals, the short chain fatty acids acetate, propionate and butyrate are produced primarily by the gut microbiome that metabolizes dietary fibers. SCFAs serve as a source of energy but also act as signaling molecules. That G protein-coupled receptor is probably coupled to the pertussis toxin-sensitive, G(i/o)-alpha family of G proteins. Its activation results in the formation of inositol 1,4,5-trisphosphate, the mobilization of intracellular calcium, the phosphorylation of the MAPK3/ERK1 and MAPK1/ERK2 kinases and the inhibition of intracellular cAMP accumulation. Activated by SCFAs and by beta-hydroxybutyrate, a ketone body produced by the liver upon starvation, it inhibits N-type calcium channels and modulates the activity of sympathetic neurons through a signaling cascade involving the beta and gamma subunits of its coupled G protein, phospholipase C and MAP kinases. Thereby, it may regulate energy expenditure through the control of the sympathetic nervous system that controls for instance heart rate. Upon activation by SCFAs accumulating in the intestine, it may also signal to the brain via neural circuits which in turn would regulate intestinal gluconeogenesis. May also control the production of hormones involved in whole-body energy homeostasis. May for instance, regulate blood pressure through renin secretion. May also regulate secretion of the PYY peptide by enteroendocrine cells and control gut motility, intestinal transit rate, and the harvesting of energy from SCFAs produced by gut microbiota. May also indirectly regulate the production of LEP/Leptin, a hormone acting on the CNS to inhibit food intake, in response to the presence of short-chain fatty acids in the intestine. Finally, may also play a role in glucose homeostasis. Besides its role in energy homeostasis, may play a role in intestinal immunity. May mediate the activation of the inflammatory and immune response by SCFAs in the gut, regulating the rapid production of chemokines and cytokines by intestinal epithelial cells. Among SCFAs, the fatty acids containing less than 6 carbons, the most potent activators are probably propionate, butyrate and pentanoate while acetate is a poor activator. The sequence is that of Free fatty acid receptor 3 (FFAR3) from Homo sapiens (Human).